A 181-amino-acid chain; its full sequence is Endoglucanase (181 aa).

A disulfide bond links Cys4 and Cys16. Asp24 acts as the Nucleophile in catalysis. 5 cysteine pairs are disulfide-bonded: Cys30-Cys69, Cys32-Cys176, Cys65-Cys178, Cys72-Cys157, and Cys103-Cys113. The active-site Proton donor is Asp132.

Digestive gland.

It catalyses the reaction Endohydrolysis of (1-&gt;4)-beta-D-glucosidic linkages in cellulose, lichenin and cereal beta-D-glucans.. Active towards the soluble carboxymethylcellulose (CMC). Possesses expansin activity too. The polypeptide is Endoglucanase (Mytilus edulis (Blue mussel)).